The following is an 82-amino-acid chain: MMSALFCDATHELDAIGLRCPEPVMMVRKKVRLMADGETLLVSADDPSTTRDIPSFCRFMDHTLVASETEQAPYRYLIRKGQ.

The active-site Cysteine persulfide intermediate is Cys20.

It belongs to the sulfur carrier protein TusA family.

It localises to the cytoplasm. Its function is as follows. Sulfur carrier protein which probably makes part of a sulfur-relay system. The protein is Sulfur carrier protein TusA of Aeromonas hydrophila subsp. hydrophila (strain ATCC 7966 / DSM 30187 / BCRC 13018 / CCUG 14551 / JCM 1027 / KCTC 2358 / NCIMB 9240 / NCTC 8049).